Here is a 491-residue protein sequence, read N- to C-terminus: Bifunctional NAD(P)H-hydrate repair enzyme Nnr (491 aa).

The interval 1-230 (MRRDINNFLF…KIGIPKEAEY (230 aa)) is NAD(P)H-hydrate epimerase. Residues 35–230 (MAIIDDNAEF…KIGIPKEAEY (196 aa)) enclose the YjeF N-terminal domain. Residues 80-84 (NNGGD) form an NADPHX 1; for epimerase activity region. Residues asparagine 81 and aspartate 154 each contribute to the K(+) site. The NADPHX 1; for epimerase activity stretch occupies residues 158–164 (GTGVKGE). Aspartate 192 lines the (6S)-NADPHX pocket. Threonine 195 contacts K(+). The 259-residue stretch at 232–490 (VGWGDLKALR…EKIPNVLKIF (259 aa)) folds into the YjeF C-terminal domain. An ADP-dependent (S)-NAD(P)H-hydrate dehydratase region spans residues 232-491 (VGWGDLKALR…KIPNVLKIFQ (260 aa)). Glycine 332 is a binding site for (6S)-NADPHX. The segment at 380 to 386 (HKREFEY) is NADPHX 2; for dehydratase activity. ADP-binding positions include 404–408 (KGKYD) and 423–432 (NAGLTKGGTG). Residue aspartate 433 coordinates (6S)-NADPHX.

It in the N-terminal section; belongs to the NnrE/AIBP family. The protein in the C-terminal section; belongs to the NnrD/CARKD family. K(+) is required as a cofactor.

The enzyme catalyses (6S)-NADHX + ADP = AMP + phosphate + NADH + H(+). It catalyses the reaction (6S)-NADPHX + ADP = AMP + phosphate + NADPH + H(+). It carries out the reaction (6R)-NADHX = (6S)-NADHX. The catalysed reaction is (6R)-NADPHX = (6S)-NADPHX. In terms of biological role, bifunctional enzyme that catalyzes the epimerization of the S- and R-forms of NAD(P)HX and the dehydration of the S-form of NAD(P)HX at the expense of ADP, which is converted to AMP. This allows the repair of both epimers of NAD(P)HX, a damaged form of NAD(P)H that is a result of enzymatic or heat-dependent hydration. The sequence is that of Bifunctional NAD(P)H-hydrate repair enzyme Nnr (nnr) from Methanocaldococcus jannaschii (strain ATCC 43067 / DSM 2661 / JAL-1 / JCM 10045 / NBRC 100440) (Methanococcus jannaschii).